The following is a 994-amino-acid chain: Regulator of telomere elongation helicase 1 homolog (994 aa).

The Helicase ATP-binding domain maps to 7 to 316 (AGIPVHFPFE…DDLMLLKEML (310 aa)). Residue 42–49 (SPTGTGKT) coordinates ATP. Residues C146, C164, C173, and C209 each contribute to the [4Fe-4S] cluster site. Positions 252–255 (DEAH) match the DEAH box motif. The tract at residues 861–887 (SSGLVKIHKRERSSPPGSSQSSSQTAK) is disordered. The span at 874–884 (SPPGSSQSSSQ) shows a compositional bias: low complexity.

It belongs to the helicase family. RAD3/XPD subfamily.

Its subcellular location is the nucleus. The catalysed reaction is ATP + H2O = ADP + phosphate + H(+). Its function is as follows. A probable ATP-dependent DNA helicase implicated in DNA repair and the maintenance of genomic stability. Acts as an anti-recombinase to counteract toxic recombination and limit crossover during meiosis. Regulates meiotic recombination and crossover homeostasis by physically dissociating strand invasion events and thereby promotes noncrossover repair by meiotic synthesis dependent strand annealing (SDSA) as well as disassembly of D loop recombination intermediates. This Drosophila ananassae (Fruit fly) protein is Regulator of telomere elongation helicase 1 homolog.